Consider the following 381-residue polypeptide: Queuine tRNA-ribosyltransferase (381 aa).

D96 (proton acceptor) is an active-site residue. Substrate is bound by residues 96–100, D150, Q193, and G220; that span reads DSGGF. The RNA binding stretch occupies residues 251 to 257; sequence GVGSPDS. The active-site Nucleophile is the D270. Residues 275-279 form an RNA binding; important for wobble base 34 recognition region; it reads TRIAR. Zn(2+)-binding residues include C308, C310, C313, and H339.

This sequence belongs to the queuine tRNA-ribosyltransferase family. As to quaternary structure, homodimer. Within each dimer, one monomer is responsible for RNA recognition and catalysis, while the other monomer binds to the replacement base PreQ1. Zn(2+) is required as a cofactor.

It carries out the reaction 7-aminomethyl-7-carbaguanine + guanosine(34) in tRNA = 7-aminomethyl-7-carbaguanosine(34) in tRNA + guanine. It functions in the pathway tRNA modification; tRNA-queuosine biosynthesis. Catalyzes the base-exchange of a guanine (G) residue with the queuine precursor 7-aminomethyl-7-deazaguanine (PreQ1) at position 34 (anticodon wobble position) in tRNAs with GU(N) anticodons (tRNA-Asp, -Asn, -His and -Tyr). Catalysis occurs through a double-displacement mechanism. The nucleophile active site attacks the C1' of nucleotide 34 to detach the guanine base from the RNA, forming a covalent enzyme-RNA intermediate. The proton acceptor active site deprotonates the incoming PreQ1, allowing a nucleophilic attack on the C1' of the ribose to form the product. After dissociation, two additional enzymatic reactions on the tRNA convert PreQ1 to queuine (Q), resulting in the hypermodified nucleoside queuosine (7-(((4,5-cis-dihydroxy-2-cyclopenten-1-yl)amino)methyl)-7-deazaguanosine). The protein is Queuine tRNA-ribosyltransferase of Bacillus licheniformis (strain ATCC 14580 / DSM 13 / JCM 2505 / CCUG 7422 / NBRC 12200 / NCIMB 9375 / NCTC 10341 / NRRL NRS-1264 / Gibson 46).